The primary structure comprises 138 residues: Ferredoxin-2 (138 aa).

A 2Fe-2S ferredoxin-type domain is found at 27 to 117 (ADANLQSTDF…DAKIVYNLKH (91 aa)). Positions 62, 67, 70, and 100 each coordinate [2Fe-2S] cluster.

It belongs to the 2Fe2S plant-type ferredoxin family. [2Fe-2S] cluster serves as cofactor.

Its function is as follows. Ferredoxins are iron-sulfur proteins that transfer electrons in a wide variety of metabolic reactions. This chain is Ferredoxin-2 (fer2), found in Haloarcula marismortui (strain ATCC 43049 / DSM 3752 / JCM 8966 / VKM B-1809) (Halobacterium marismortui).